Here is a 141-residue protein sequence, read N- to C-terminus: Ubiquitin-like protein ATG12 (141 aa).

Positions 24–54 (LELSPETAIPEPPSSVAVSPGTEEPPGDTKK) are disordered. A Glycyl lysine isopeptide (Gly-Lys) (interchain with K-? in acceptor protein) cross-link involves residue glycine 141.

This sequence belongs to the ATG12 family. In terms of assembly, forms a conjugate with ATG5. Part of the minor complex composed of 4 sets of ATG12-ATG5 and ATG16L1 (400 kDa); this complex interacts with ATG3 leading to disruption of ATG7 interaction and promotion of ATG8-like proteins lipidation. Forms an 800-kDa complex composed of ATG12-ATG5 and ATG16L2. Interacts with DHX58/RIG-1, IFIH1/MDA5 and MAVS/IPS-1 in monomeric form as well as in ATG12-ATG5 conjugate. The interaction with MAVS is further enhanced upon vesicular stomatitis virus (VSV) infection. Interacts with ATG3; this interaction is essential for phosphatidylethanolamine (PE)-conjugated ATG8-like proteins formation. Interacts with ATG7. Interacts with ATG10. The ATG12-ATG5 conjugate interacts with RAB33A; this interaction is bridged by ATG16L1 and promotes ATG12-ATG5-ATG16L1 complex recruitment to phagophores. Interacts with TECPR1. Interacts with SH3BGRL. The ATG12-ATG5 conjugate interacts with PDCD6IP (via the BRO1 domain); this interaction is bridged by ATG12 and promotes multiple PDCD6IP-mediated functions such as endolysosomal trafficking, macroautophagy and exosome biogenesis. Acetylated by EP300.

Its subcellular location is the cytoplasm. The protein localises to the preautophagosomal structure membrane. Functionally, ubiquitin-like protein involved in autophagy vesicles formation. Conjugation with ATG5 through a ubiquitin-like conjugating system involving also ATG7 as an E1-like activating enzyme and ATG10 as an E2-like conjugating enzyme, is essential for its function. The ATG12-ATG5 conjugate acts as an E3-like enzyme which is required for lipidation of ATG8 family proteins and their association to the vesicle membranes. The ATG12-ATG5 conjugate also negatively regulates the innate antiviral immune response by blocking the type I IFN production pathway through direct association with RARRES3 and MAVS. Also plays a role in translation or delivery of incoming viral RNA to the translation apparatus. As part of the ATG8 conjugation system with ATG5 and ATG16L1, required for recruitment of LRRK2 to stressed lysosomes and induction of LRRK2 kinase activity in response to lysosomal stress. The polypeptide is Ubiquitin-like protein ATG12 (Rattus norvegicus (Rat)).